The sequence spans 843 residues: Excretory canal abnormal protein 6 (843 aa).

Disordered regions lie at residues 54–135 (QLKD…EKKT), 568–601 (TLES…PAKT), 748–767 (TPLS…MTAE), and 773–843 (TMKP…PKWV). Pro residues-rich tracts occupy residues 66–76 (TPPPPPPPPPL) and 83–103 (APPP…PPPI). Residues 127-512 (FLPKKEKKTK…KEEKKETQTT (386 aa)) enclose the FH2 domain. Composition is skewed to polar residues over residues 776-792 (PSVS…TSSH) and 819-830 (IPQSPTVTSSAR).

The protein belongs to the formin homology family. Expressed in the excretory cell and mostly accumulates at the tip of the excretory cell canals.

The protein localises to the cytoplasm. The protein resides in the cytoskeleton. Its function is as follows. Constitutively active protein required for microtubule and F-actin growth, structural maintenance and organization during excretory cell tubulogenesis. The protein is Excretory canal abnormal protein 6 of Caenorhabditis elegans.